A 1772-amino-acid chain; its full sequence is MALSLWPLLLLLLLLLLLSFAVTLAPTGPHSLDPGLSFLKSLLSTLDQAPQGSLSRSRFFTFLANISSSFEPGRMGEGPVGEPPPLQPPALRLHDFLVTLRGSPDWEPMLGLLGDMLALLGQEQTPRDFLVHQAGVLGGLVEVLLGALVPGGPPTPTQPPCTRDGPSDCVLAADWLPSLLLLLEGTRWQALVQVQPSVDPTNATGLDGREAAPHFLQGLLGLLTPTGELGSKEALWGGLLRTVGAPLYAAFQEGLLRVTHSLQDEVFSILGQPEPDTNGQCQGGNLQQLLLWGVRHNLSWDVQALGFLSGSPPPPPALLHCLSTGVPLPRASQPSAHISPRQRRAITVEALCENHLGPAPPYSISNFSIHLLCQHTKPATPQPHPSTTAICQTAVWYAVSWAPGAQGWLQACHDQFPDEFLDAICSNLSFSALSGSNRRLVKRLCAGLLPPPTSCPEGLPPVPLTPDIFWGCFLENETLWAERLCGEASLQAVPPSNQAWVQHVCQGPTPDVTASPPCHIGPCGERCPDGGSFLVMVCANDTMYEVLVPFWPWLAGQCRISRGGNDTCFLEGLLGPLLPSLPPLGPSPLCLTPGPFLLGMLSQLPRCQSSVPALAHPTRLHYLLRLLTFLLGPGAGGAEAQGMLGRALLLSSLPDNCSFWDAFRPEGRRSVLRTIGEYLEQDEEQPTPSGFEPTVNPSSGISKMELLACFSPVLWDLLQREKSVWALQILVQAYLHMPPENLQQLVLSAEREAAQGFLTLMLQGKLQGKLQVPPSEEQALGRLTALLLQRYPRLTSQLFIDLSPLIPFLAVSDLMRFPPSLLANDSVLAAIRDYSPGMRPEQKEALAKRLLAPELFGEVPAWPQELLWAVLPLLPHLPLENFLQLSPHQIQALEDSWPAAGLGPGHARHVLRSLVNQSVQDGEEQVRRLGPLACFLSPEELQSLVPLSDPTGPVERGLLECAANGTLSPEGRVAYELLGVLRSSGGAVLSPRELRVWAPLFSQLGLRFLQELSEPQLRAMLPVLQGTSVTPAQAVLLLGRLLPRHDLSLEELCSLHLLLPGLSPQTLQAIPRRVLVGACSCLAPELSRLSACQTAALLQTFRVKDGVKNMGTTGAGPAVCIPGQQPIPTTWPDCLLPLLPLKLLQLDSLALLANRRRYWELPWSEQQAQFLWKKMQVPTNLTLRNLQALGTLAGGMSCEFLQQINSMVDFLEVVHMIYQLPTRVRGSLRACIWAELQRRMAMPEPEWTTVGPELNGLDSKLLLDLPIQLMDRLSNESIMLVVELVQRAPEQLLALTPLHQAALAERALQNLAPKETPVSGEVLETLGPLVGFLGTESTRQIPLQILLSHLSFCLGETFATELGWLLLQESVLGKPELWSQDEVEQAGRLVFTLSTEAISLIPREALGPETLERLLEKQQSWEQSRVGQLCRGPQLAAKKAALVAGVVRPAAEDLPEPVPNCADVRGTFPAACSATQIAEMELSDFKDCLTLFAGDPGLGPEEPRAAMGKAKWLWGPPRGFGPEQILQLGRLLIGLGDQELQELILVDWGVLSTLGQIDGWSSTQLRIVVSSFLRQSGRHVSHLDFVHLTALGYTLCGLRPEELQHISSWEFSQAALFLGTLHLQCSEEQLEFLAHLFVLPGGFGPISNWGPEIFTEIGTIAAGIPDLALSALLRGQIQGVTPLAISVIPPPKFAVVFSPIQLSSLASAQAVAVTPEQMAFLSPEQRRAVAWAQHEGKESPEQQGRSTAWGLQDWSRPSWSLVLTISFLGHLL.

Residues 1 to 25 (MALSLWPLLLLLLLLLLLSFAVTLA) form the signal peptide. N-linked (GlcNAc...) asparagine glycans are attached at residues Asn65, Asn427, Asn476, and Asn565.

It belongs to the stereocilin family.

Its subcellular location is the secreted. The polypeptide is Putative stereocilin-like protein (STRCP1) (Homo sapiens (Human)).